A 568-amino-acid chain; its full sequence is Acyl-CoA ligase gloD (568 aa).

ATP-binding positions include 211-219 (TSGTSGFLK), 352-357 (PGYGLT), aspartate 436, arginine 455, and lysine 553. The SBD1 stretch occupies residues 282–352 (DMQIALKSVQ…QLCPEWEINP (71 aa)). Residues 353–415 (GYGLTESFVC…VRSPSVMKEY (63 aa)) are SBD2.

This sequence belongs to the ATP-dependent AMP-binding enzyme family.

Its pathway is mycotoxin biosynthesis. In terms of biological role, acyl-CoA ligase; part of the gene cluster that mediates the biosynthesis of pneumocandins, lipohexapeptides of the echinocandin family that prevent fungal cell wall formation by non-competitive inhibition of beta-1,3-glucan synthase. The 10,12-dimethylmyristoyl side chain is synthesized by the reducing polyketide synthase gloL/GLPKS4. The thioesterase gloN/GLHYD exclusively interacts with gloL/GLPKS4 to maintain turnover of the polyketide side chain. The 10R,12S-dimethylmyristic acid is then transferred to the first thiolation domain of the nonribosomal peptide synthetase gloA/GLNRPS4 by the acyl-AMP ligase gloD/GLligase, followed by its acylation to L-ornithine to trigger elongation of the cyclic hexapeptide. L-ornithine, 4R-hydroxyl-L-proline (generated from L-proline by the dioxygenase gloF/GLOXY2), 3S-hydroxyl-L-homotyrosine (generated by gloG/GLHtyB, gloH/GLHtyA, gloI/GLHtyC, gloJ/GLHtyD and hydroxylated at C-3 by the dioxygenase gloM/GLOXY1), 3R-hydroxyl-L-glutamine (generated from L-glutamine probably by the dioxygenase gloE/GLOXY3) and 3S-hydroxyl-L-proline (generated from L-proline by the dioxygenase gloF/GLOXY2 to yield pneumocandin B0), or 3S-hydroxyl-4S-methyl-L-proline (generated from L-leucine by the dioxygenase gloC/GLOXY4 to yield pneumocandin A0) are sequentially added to the growing chain. The last C domain of gloA/GLNRPS4 is proposed to be responsible for cyclization by condensation to form the peptide bond between L-ornithine and 3S-hydroxyl-4S-methyl-L-proline (for pneumocandin A0) or 3S-hydroxyl-L-proline (for pneumocandin B0). Finally, the subsequent C-4 hydroxylation of 3S-hydroxyl-L-homotyrosine and L-ornithine dihydroxylation at C-4 and C-5 are performed by the cytochrome P450 monooxygenases gloP/GLP450-1 and gloO/GLP450-2, respectively. In Glarea lozoyensis (strain ATCC 20868 / MF5171), this protein is Acyl-CoA ligase gloD.